We begin with the raw amino-acid sequence, 406 residues long: RILP-like protein 1 (406 aa).

Residue Ser7 is modified to Phosphoserine. The 88-residue stretch at 10–97 (AALSALEKNV…RVERMDRIEK (88 aa)) folds into the RH1 domain. Cys47 is modified (S-nitrosocysteine). A coiled-coil region spans residues 76–258 (ELDELRLELD…KLRERLQGEH (183 aa)). Disordered stretches follow at residues 255–280 (QGEH…ESIS) and 330–354 (EIEE…QPES). Ser259 carries the post-translational modification Phosphoserine. The span at 262–280 (GEEEEAEIPPQPDGEESIS) shows a compositional bias: acidic residues. Positions 294–359 (RPRFTLQELR…PQPESGIKRL (66 aa)) constitute an RH2 domain.

Belongs to the RILPL family. Interacts (when S-nitrosylated) with GAPDH. Interacts with RAB8A; interaction is dependent on the phosphorylation of 'Thr-72' of RAB8A. Interacts with RAB10 and RAB12; the interaction is dependent on the phosphorylation of 'Thr-73' of RAB10, and 'Ser-105' of RAB12. Post-translationally, S-nitrosylation is required for the interaction with GAPDH. Highly expressed in heart, skeletal muscle, brain and lung (at protein level).

The protein resides in the cytoplasm. The protein localises to the cytosol. It is found in the cytoskeleton. It localises to the microtubule organizing center. Its subcellular location is the centrosome. The protein resides in the centriole. The protein localises to the cilium basal body. Functionally, plays a role in the regulation of cell shape and polarity. Plays a role in cellular protein transport, including protein transport away from primary cilia. Neuroprotective protein, which acts by sequestring GAPDH in the cytosol and prevent the apoptotic function of GAPDH in the nucleus. Competes with SIAH1 for binding GAPDH. Does not regulate lysosomal morphology and distribution. Binds to RAB10 following LRRK2-mediated RAB10 phosphorylation which leads to inhibition of ciliogenesis. The polypeptide is RILP-like protein 1 (Rilpl1) (Rattus norvegicus (Rat)).